Reading from the N-terminus, the 860-residue chain is MFMSTDEVRRAFLSFFESKGHQIVESSSLVPANDPTLLFTNAGMNQFKDCFLGLEKRAYTRATTAQRCVRAGGKHNDLENVGFTARHHTFFEMLGNFSFGDYFKEDAIQYAWEFLTDVLQLPKERLLVTVYETDDEAFDIWNKKVGIPADRIIRIGDKKGGKKFDSDNFWQMGDTGPCGPCTEIFYDHGDHIWGGPPGSPEEDGDRFIEIWNNVFMQFNRHADGTMEPLPKPSVDTGMGIERISAIMQGVHSNYEIDVFQTLIKAAADAIGYQDLTNQSLRVVADHIRSCAFLIVDGVMPSNEGRGYVLRRIIRRAVRHGNKLGAQGAFFHKLVGPLAEVMGTAGVELKKQQALVEKVLRIEEENFGRTLDRGMSILNDALDQLSGQVLDGETVFKLYDTYGFPADLTNDVARERGFSIDEAGFEQAMEEQRQRAREAGQFGTDYNSLIKSATNTEFCGYTASRGQSVVREMFVEGAEVSTLSAGDKAIIVLDNTPFYAESGGQCGDTGVLKTDAGIFHVEDTQKLGNAIAHHGVLAQGVLATGDQVDAIVDEKRRAAISLNHSATHLLHAALRKVLGEHVAQKGSLVRAETLRFDFSHLEAMTAAEIKEVERLVNQEVRRNHSIETNIMNIDEAKAKGAMALFGEKYDDQVRVLSMGDFSTELCGGIHASNTGDIGLFKIISEGGIAAGIRRIEAVTGEGALDYLDAQQAQHDAKVSEMAAKAKLLEKEIQQLKDKLAAKESAGLINQVKQIAGVNVLVAQLNGADNKALRGMVDDLKNQLSSGIIMLGNVAEGKVGLIAGVTNDLTNKVKAGELVNMVALQVGGKGGGRPDMAQAGGTDAHALPSALESVDAWIAERL.

4 residues coordinate Zn(2+): His-563, His-567, Cys-665, and His-669.

It belongs to the class-II aminoacyl-tRNA synthetase family. Zn(2+) is required as a cofactor.

The protein resides in the cytoplasm. The catalysed reaction is tRNA(Ala) + L-alanine + ATP = L-alanyl-tRNA(Ala) + AMP + diphosphate. Functionally, catalyzes the attachment of alanine to tRNA(Ala) in a two-step reaction: alanine is first activated by ATP to form Ala-AMP and then transferred to the acceptor end of tRNA(Ala). Also edits incorrectly charged Ser-tRNA(Ala) and Gly-tRNA(Ala) via its editing domain. The polypeptide is Alanine--tRNA ligase (Vibrio cholerae serotype O1 (strain ATCC 39541 / Classical Ogawa 395 / O395)).